The following is a 548-amino-acid chain: Palmitoyltransferase pfa3 (548 aa).

At 1-32 (MMATLATSPPTSPTWPKRRPRAWALRCERYCC) the chain is on the cytoplasmic side. A helical membrane pass occupies residues 33-53 (AAATYFPLAFVYSLTTWAVYV). Topologically, residues 54–70 (EASIGLKPSRSPWIGLP) are extracellular. The chain crosses the membrane as a helical span at residues 71–91 (TSILGVLLYICLNASYTVAVF). Residues 92–173 (TDPGSPLTTG…ATCVGLYNYK (82 aa)) are Cytoplasmic-facing. The region spanning 130 to 180 (RYCKKCQCPKPDRAHHCSTCKRCVLKMDHHCPWLATCVGLYNYKAFLLFLI) is the DHHC domain. A helical membrane pass occupies residues 174-194 (AFLLFLIYTSLFCWVDFAVSA). At 195-215 (TWIWTEVFNDAPYLETMLPVN) the chain is on the extracellular side. The helical transmembrane segment at 216–236 (VVLLAILGGIIGLVLTGFTAW) threads the bilayer. Topologically, residues 237-548 (HISLAVRGMT…EDSSEWRDWD (312 aa)) are cytoplasmic. 2 disordered regions span residues 313-339 (RAEE…DQLT) and 463-548 (NPHQ…RDWD). Polar residues predominate over residues 508–535 (DPLNQQSVPANGAVNQLQKANEASSATT). The segment covering 536-548 (NRREDSSEWRDWD) has biased composition (basic and acidic residues).

This sequence belongs to the DHHC palmitoyltransferase family. PFA3 subfamily. Post-translationally, autopalmitoylated.

It localises to the vacuole membrane. The catalysed reaction is L-cysteinyl-[protein] + hexadecanoyl-CoA = S-hexadecanoyl-L-cysteinyl-[protein] + CoA. Its function is as follows. Palmitoyltransferase specific for VAC8. Palmitoylates VAC8 at one or more of its N-terminal cysteine residues, which is required for its proper membrane localization. In Aspergillus fumigatus (strain ATCC MYA-4609 / CBS 101355 / FGSC A1100 / Af293) (Neosartorya fumigata), this protein is Palmitoyltransferase pfa3 (pfa3).